The following is a 173-amino-acid chain: HAM34 protein (173 aa).

A compositionally biased stretch (low complexity) spans 22-89; it reads AAPATTPDTA…ADGTQTATAP (68 aa). The interval 22–155 is disordered; the sequence is AAPATTPDTA…ATDTTSGASH (134 aa). The segment covering 95–133 has biased composition (polar residues); the sequence is TEESSASGEMTPTVGTDTSDQVSDSTAAGPSTPEGSMTG. Low complexity predominate over residues 134 to 155; sequence TSTPKASDSSSSATDTTSGASH.

In terms of tissue distribution, germinating spores.

Its function is as follows. Could be a structural protein required for the infection process of B.lactucae. This Bremia lactucae (Lettuce downy mildew) protein is HAM34 protein (HAM34).